Consider the following 571-residue polypeptide: Septation ring formation regulator EzrA (571 aa).

Residues M1–Y3 are Extracellular-facing. A helical membrane pass occupies residues M4–L22. Over K23–E571 the chain is Cytoplasmic. 5 coiled-coil regions span residues V169–E214, A249–E298, D326–E374, K400–L438, and T474–F529.

The protein belongs to the EzrA family.

It localises to the cell membrane. Negative regulator of FtsZ ring formation; modulates the frequency and position of FtsZ ring formation. Inhibits FtsZ ring formation at polar sites. Interacts either with FtsZ or with one of its binding partners to promote depolymerization. In Listeria welshimeri serovar 6b (strain ATCC 35897 / DSM 20650 / CCUG 15529 / CIP 8149 / NCTC 11857 / SLCC 5334 / V8), this protein is Septation ring formation regulator EzrA.